A 146-amino-acid polypeptide reads, in one-letter code: Hemoglobin subunit beta (146 aa).

Val-1 is subject to N-acetylvaline. A Globin domain is found at 2-146 (HLSGGEKSAV…VAHALGHKYH (145 aa)). Phosphothreonine is present on Thr-12. N6-acetyllysine is present on Lys-59. His-63 is a heme b binding site. An N6-acetyllysine modification is found at Lys-82. A heme b-binding site is contributed by His-92. The residue at position 93 (Cys-93) is an S-nitrosocysteine. At Lys-144 the chain carries N6-acetyllysine.

This sequence belongs to the globin family. Heterotetramer of two alpha chains and two beta chains. As to expression, red blood cells.

In terms of biological role, involved in oxygen transport from the lung to the various peripheral tissues. This Ornithorhynchus anatinus (Duckbill platypus) protein is Hemoglobin subunit beta (HBB).